The following is a 130-amino-acid chain: Small ribosomal subunit protein uS8 (130 aa).

This sequence belongs to the universal ribosomal protein uS8 family. As to quaternary structure, component of the small ribosomal subunit (SSU). Mature N.crassa ribosomes consist of a small (40S) and a large (60S) subunit. The 40S small subunit contains 1 molecule of ribosomal RNA (18S rRNA) and at least 32 different proteins. The large 60S subunit contains 3 rRNA molecules (26S, 5.8S and 5S rRNA) and at least 42 different proteins.

The protein resides in the cytoplasm. Its function is as follows. Component of the ribosome, a large ribonucleoprotein complex responsible for the synthesis of proteins in the cell. The small ribosomal subunit (SSU) binds messenger RNAs (mRNAs) and translates the encoded message by selecting cognate aminoacyl-transfer RNA (tRNA) molecules. The large subunit (LSU) contains the ribosomal catalytic site termed the peptidyl transferase center (PTC), which catalyzes the formation of peptide bonds, thereby polymerizing the amino acids delivered by tRNAs into a polypeptide chain. The nascent polypeptides leave the ribosome through a tunnel in the LSU and interact with protein factors that function in enzymatic processing, targeting, and the membrane insertion of nascent chains at the exit of the ribosomal tunnel. The protein is Small ribosomal subunit protein uS8 (crp-27) of Neurospora crassa (strain ATCC 24698 / 74-OR23-1A / CBS 708.71 / DSM 1257 / FGSC 987).